A 921-amino-acid chain; its full sequence is Isoleucine--tRNA ligase (921 aa).

Positions 57-67 (PYANGDIHMGH) match the 'HIGH' region motif. Glutamate 552 contacts L-isoleucyl-5'-AMP. The 'KMSKS' region signature appears at 593–597 (KMSKS). Lysine 596 contributes to the ATP binding site. Zn(2+) is bound by residues cysteine 888, cysteine 891, cysteine 908, and cysteine 911.

It belongs to the class-I aminoacyl-tRNA synthetase family. IleS type 1 subfamily. As to quaternary structure, monomer. Requires Zn(2+) as cofactor.

It is found in the cytoplasm. It catalyses the reaction tRNA(Ile) + L-isoleucine + ATP = L-isoleucyl-tRNA(Ile) + AMP + diphosphate. Functionally, catalyzes the attachment of isoleucine to tRNA(Ile). As IleRS can inadvertently accommodate and process structurally similar amino acids such as valine, to avoid such errors it has two additional distinct tRNA(Ile)-dependent editing activities. One activity is designated as 'pretransfer' editing and involves the hydrolysis of activated Val-AMP. The other activity is designated 'posttransfer' editing and involves deacylation of mischarged Val-tRNA(Ile). This chain is Isoleucine--tRNA ligase, found in Bacillus cereus (strain AH187).